Here is a 545-residue protein sequence, read N- to C-terminus: Solute carrier family 22 member 6 (545 aa).

Residues 1–9 (MAFNDLLKQ) are Cytoplasmic-facing. A helical membrane pass occupies residues 10–30 (VGGVGRFQLIQVTMVVAPLLL). Over 31–129 (MASHNTLQNF…LVCSHRAFRQ (99 aa)) the chain is Extracellular. N-linked (GlcNAc...) asparagine glycans are attached at residues asparagine 39, asparagine 56, asparagine 86, asparagine 91, and asparagine 107. The helical transmembrane segment at 130-150 (LAQSLFMVGVLLGAMMFGYLA) threads the bilayer. At 151–157 (DRLGRRK) the chain is on the cytoplasmic side. The chain crosses the membrane as a helical span at residues 158–177 (VLILNYLQTAVSGTCAAYAP). Asparagine 178 carries N-linked (GlcNAc...) asparagine glycosylation. Topologically, residues 178–180 (NYT) are extracellular. The chain crosses the membrane as a helical span at residues 181-201 (VYCIFRLLSGMSLASIAINCM). Over 202 to 218 (TLNMEWMPIHTRAYVGT) the chain is Cytoplasmic. The chain crosses the membrane as a helical span at residues 219–239 (LIGYVYSLGQFLLAGIAYAVP). Residues 240–242 (HWR) lie on the Extracellular side of the membrane. Residues 243–263 (HLQLAVSVPFFVAFIYSWFFI) traverse the membrane as a helical segment. Over 264–331 (ESARWYSSSG…ELLRCPTLRR (68 aa)) the chain is Cytoplasmic. A helical transmembrane segment spans residues 332–352 (LFLCLSMLWFATSFAYYGLVM). Residues 353-362 (DLQGFGVSMY) lie on the Extracellular side of the membrane. Residues 363–383 (LIQVIFGAVDLPAKFVCFLVI) form a helical membrane-spanning segment. At 384–389 (NSMGRR) the chain is on the cytoplasmic side. A helical membrane pass occupies residues 390-410 (PAQLASLLLAGICILVNGIIP). Residues 411–419 (RGHTIIRTS) are Extracellular-facing. Residues 420–440 (LAVLGKGCLASSFNCIFLYTG) traverse the membrane as a helical segment. Residues 441-450 (ELYPTMIRQT) lie on the Cytoplasmic side of the membrane. A helical membrane pass occupies residues 451 to 471 (GLGMGSTMARVGSIVSPLISM). Residues 472–478 (TAEFYPS) are Extracellular-facing. Residues 479-499 (IPLFIFGAVPVAASAVTALLP) form a helical membrane-spanning segment. The Cytoplasmic segment spans residues 500–545 (ETLGQPLPDTVQDLKSRSRGKQKQQQLEQQKQMIPLQVSTQEKNGL). Positions 515–545 (SRSRGKQKQQQLEQQKQMIPLQVSTQEKNGL) are disordered. Residues 522-531 (KQQQLEQQKQ) show a composition bias toward low complexity. The span at 536 to 545 (QVSTQEKNGL) shows a compositional bias: polar residues.

Belongs to the major facilitator (TC 2.A.1) superfamily. Organic cation transporter (TC 2.A.1.19) family. Glycosylated. Glycosylation is necessary for proper targeting of the transporter to the plasma membrane. As to expression, expressed in kidney. In kidney, restricted to the proximal convoluted tubule (representing S1 and S2 segments). In brain, expressed in neurons of the cortex cerebri and hippocampus as well as in the ependymal cell layer of the choroid plexus.

It is found in the basolateral cell membrane. Its subcellular location is the basal cell membrane. The catalysed reaction is (6R)-L-erythro-5,6,7,8-tetrahydrobiopterin(out) + a dicarboxylate(in) = (6R)-L-erythro-5,6,7,8-tetrahydrobiopterin(in) + a dicarboxylate(out). The enzyme catalyses L-erythro-7,8-dihydrobiopterin(out) + a dicarboxylate(in) = L-erythro-7,8-dihydrobiopterin(in) + a dicarboxylate(out). It carries out the reaction L-sepiapterin(out) + a dicarboxylate(in) = L-sepiapterin(in) + a dicarboxylate(out). It catalyses the reaction prostaglandin F2alpha(out) + a dicarboxylate(in) = prostaglandin F2alpha(in) + a dicarboxylate(out). The catalysed reaction is prostaglandin E2(out) + a dicarboxylate(in) = prostaglandin E2(in) + a dicarboxylate(out). The enzyme catalyses 3',5'-cyclic AMP(out) + a dicarboxylate(in) = 3',5'-cyclic AMP(in) + a dicarboxylate(out). It carries out the reaction 3',5'-cyclic GMP(out) + a dicarboxylate(in) = 3',5'-cyclic GMP(in) + a dicarboxylate(out). It catalyses the reaction urate(out) + a dicarboxylate(in) = urate(in) + a dicarboxylate(out). The catalysed reaction is kynurenate(out) + glutarate(in) = kynurenate(in) + glutarate(out). The enzyme catalyses (indol-3-yl)acetate(out) + a dicarboxylate(in) = (indol-3-yl)acetate(in) + a dicarboxylate(out). It carries out the reaction indoxyl sulfate(out) + a dicarboxylate(in) = indoxyl sulfate(in) + a dicarboxylate(out). It catalyses the reaction N-benzoylglycine(out) + a dicarboxylate(in) = N-benzoylglycine(in) + a dicarboxylate(out). The catalysed reaction is 3-carboxy-4-methyl-5-propyl-2-furanpropanoate(out) + a dicarboxylate(in) = 3-carboxy-4-methyl-5-propyl-2-furanpropanoate(in) + a dicarboxylate(out). Its function is as follows. Secondary active transporter that functions as a Na(+)-independent organic anion (OA)/dicarboxylate antiporter where the uptake of one molecule of OA into the cell is coupled with an efflux of one molecule of intracellular dicarboxylate such as 2-oxoglutarate or glutarate. Mediates the uptake of OA across the basolateral side of proximal tubule epithelial cells, thereby contributing to the renal elimination of endogenous OA from the systemic circulation into the urine. Functions as a biopterin transporters involved in the uptake and the secretion of coenzymes tetrahydrobiopterin (BH4), dihydrobiopterin (BH2) and sepiapterin to urine, thereby determining baseline levels of blood biopterins. Transports prostaglandin E2 (PGE2) and prostaglandin F2-alpha (PGF2-alpha) and may contribute to their renal excretion. Involved in the transport of neuroactive tryptophan metabolites kynurenate (KYNA) and xanthurenate (XA). May transport glutamate. Also involved in the disposition of uremic toxins and potentially toxic xenobiotics by the renal organic anion secretory pathway, helping reduce their undesired toxicological effects on the body. Uremic toxins include the indoxyl sulfate (IS), hippurate/N-benzoylglycine (HA), indole acetate (IA) and 3-carboxy-4- methyl-5-propyl-2-furanpropionate(CMPF) and urate. Xenobiotics include the mycotoxin ochratoxin (OTA). May also contribute to the transport of organic compounds in testes across the blood-testis-barrier. The chain is Solute carrier family 22 member 6 from Mus musculus (Mouse).